The sequence spans 130 residues: Blasticidin-S deaminase (130 aa).

A CMP/dCMP-type deaminase domain is found at 1–129 (MPLSQEESTL…ELLPSGYVWE (129 aa)). Ser28 contacts substrate. Residue Cys54 participates in Zn(2+) binding. The active-site Proton donor is the Glu56. A substrate-binding site is contributed by Arg82. Zn(2+) is bound by residues Cys88 and Cys91. The substrate site is built by Tyr126 and Trp128.

Belongs to the cytidine and deoxycytidylate deaminase family. As to quaternary structure, homotetramer. Zn(2+) is required as a cofactor.

It catalyses the reaction blasticidin S + H2O + H(+) = deaminohydroxyblasticidin S + NH4(+). Functionally, catalyzes the deamination of the cytosine moiety of the antibiotics blasticidin S, cytomycin and acetylblasticidin S. The protein is Blasticidin-S deaminase (bsd) of Aspergillus terreus.